Here is a 317-residue protein sequence, read N- to C-terminus: Glutathione synthetase (317 aa).

Residues 124-310 (EKLFTAWFPE…ITGKLMDAIE (187 aa)) form the ATP-grasp domain. 150–207 (FRQEHGDIILKPLDGMGGASIFRVKENDPNVSVIIETLTNHGQNYAMAQTFVPDISNG) serves as a coordination point for ATP. Residues E281 and N283 each coordinate Mg(2+).

Belongs to the prokaryotic GSH synthase family. The cofactor is Mg(2+). Requires Mn(2+) as cofactor.

The catalysed reaction is gamma-L-glutamyl-L-cysteine + glycine + ATP = glutathione + ADP + phosphate + H(+). Its pathway is sulfur metabolism; glutathione biosynthesis; glutathione from L-cysteine and L-glutamate: step 2/2. The chain is Glutathione synthetase from Vibrio vulnificus (strain CMCP6).